The sequence spans 159 residues: Ribosomal RNA large subunit methyltransferase H (159 aa).

S-adenosyl-L-methionine contacts are provided by residues Leu76, Gly108, and 127-132 (FSKMTF).

It belongs to the RNA methyltransferase RlmH family. Homodimer.

It localises to the cytoplasm. It catalyses the reaction pseudouridine(1915) in 23S rRNA + S-adenosyl-L-methionine = N(3)-methylpseudouridine(1915) in 23S rRNA + S-adenosyl-L-homocysteine + H(+). Specifically methylates the pseudouridine at position 1915 (m3Psi1915) in 23S rRNA. The sequence is that of Ribosomal RNA large subunit methyltransferase H from Clostridium botulinum (strain Langeland / NCTC 10281 / Type F).